Consider the following 431-residue polypeptide: Serine--tRNA ligase (431 aa).

237-239 (TAE) contacts L-serine. 268 to 270 (RSE) lines the ATP pocket. Glu291 contributes to the L-serine binding site. Residue 355–358 (EISS) coordinates ATP. Ser390 contributes to the L-serine binding site.

It belongs to the class-II aminoacyl-tRNA synthetase family. Type-1 seryl-tRNA synthetase subfamily. In terms of assembly, homodimer. The tRNA molecule binds across the dimer.

The protein localises to the cytoplasm. It catalyses the reaction tRNA(Ser) + L-serine + ATP = L-seryl-tRNA(Ser) + AMP + diphosphate + H(+). The catalysed reaction is tRNA(Sec) + L-serine + ATP = L-seryl-tRNA(Sec) + AMP + diphosphate + H(+). It functions in the pathway aminoacyl-tRNA biosynthesis; selenocysteinyl-tRNA(Sec) biosynthesis; L-seryl-tRNA(Sec) from L-serine and tRNA(Sec): step 1/1. Catalyzes the attachment of serine to tRNA(Ser). Is also able to aminoacylate tRNA(Sec) with serine, to form the misacylated tRNA L-seryl-tRNA(Sec), which will be further converted into selenocysteinyl-tRNA(Sec). This Neisseria gonorrhoeae (strain NCCP11945) protein is Serine--tRNA ligase.